Reading from the N-terminus, the 374-residue chain is Dual-specificity RNA methyltransferase RlmN (374 aa).

The active-site Proton acceptor is Glu-94. In terms of domain architecture, Radical SAM core spans Glu-100–Asp-339. Cys-107 and Cys-344 are oxidised to a cystine. The [4Fe-4S] cluster site is built by Cys-114, Cys-118, and Cys-121. Residues Gly-168 to Glu-169, Ser-200, Ser-222 to His-224, and Asn-301 each bind S-adenosyl-L-methionine. Catalysis depends on Cys-344, which acts as the S-methylcysteine intermediate.

Belongs to the radical SAM superfamily. RlmN family. Requires [4Fe-4S] cluster as cofactor.

The protein resides in the cytoplasm. It catalyses the reaction adenosine(2503) in 23S rRNA + 2 reduced [2Fe-2S]-[ferredoxin] + 2 S-adenosyl-L-methionine = 2-methyladenosine(2503) in 23S rRNA + 5'-deoxyadenosine + L-methionine + 2 oxidized [2Fe-2S]-[ferredoxin] + S-adenosyl-L-homocysteine. The catalysed reaction is adenosine(37) in tRNA + 2 reduced [2Fe-2S]-[ferredoxin] + 2 S-adenosyl-L-methionine = 2-methyladenosine(37) in tRNA + 5'-deoxyadenosine + L-methionine + 2 oxidized [2Fe-2S]-[ferredoxin] + S-adenosyl-L-homocysteine. Its function is as follows. Specifically methylates position 2 of adenine 2503 in 23S rRNA and position 2 of adenine 37 in tRNAs. m2A2503 modification seems to play a crucial role in the proofreading step occurring at the peptidyl transferase center and thus would serve to optimize ribosomal fidelity. The sequence is that of Dual-specificity RNA methyltransferase RlmN from Vibrio vulnificus (strain CMCP6).